The primary structure comprises 278 residues: uncharacterized protein (278 aa).

Basic and acidic residues predominate over residues 1-16; that stretch reads MFGLKVKDAQKDDQKS. Disordered stretches follow at residues 1 to 86 and 98 to 126; these read MFGL…RGSN and FGTTSSSESGQSGTQGSTPSNPGPWTPWL. 2 stretches are compositionally biased toward low complexity: residues 33–45 and 99–117; these read QGTSTTTQRRGSS and GTTSSSESGQSGTQGSTPS.

Belongs to the adhesin P1 family.

This is an uncharacterized protein from Mycoplasma pneumoniae (strain ATCC 29342 / M129 / Subtype 1) (Mycoplasmoides pneumoniae).